Here is a 428-residue protein sequence, read N- to C-terminus: Enolase (428 aa).

(2R)-2-phosphoglycerate is bound at residue glutamine 163. Glutamate 205 serves as the catalytic Proton donor. Mg(2+) is bound by residues aspartate 242, glutamate 286, and aspartate 313. (2R)-2-phosphoglycerate is bound by residues lysine 338, arginine 367, serine 368, and lysine 389. Lysine 338 (proton acceptor) is an active-site residue.

Belongs to the enolase family. Requires Mg(2+) as cofactor.

It is found in the cytoplasm. The protein resides in the secreted. The protein localises to the cell surface. It carries out the reaction (2R)-2-phosphoglycerate = phosphoenolpyruvate + H2O. It functions in the pathway carbohydrate degradation; glycolysis; pyruvate from D-glyceraldehyde 3-phosphate: step 4/5. Its function is as follows. Catalyzes the reversible conversion of 2-phosphoglycerate (2-PG) into phosphoenolpyruvate (PEP). It is essential for the degradation of carbohydrates via glycolysis. The protein is Enolase of Bordetella bronchiseptica (strain ATCC BAA-588 / NCTC 13252 / RB50) (Alcaligenes bronchisepticus).